A 123-amino-acid polypeptide reads, in one-letter code: Small ribosomal subunit protein uS12cz/uS12cy (123 aa).

This sequence belongs to the universal ribosomal protein uS12 family. As to quaternary structure, part of the 30S ribosomal subunit.

The protein resides in the plastid. Its subcellular location is the chloroplast. Its function is as follows. With S4 and S5 plays an important role in translational accuracy. Located at the interface of the 30S and 50S subunits. This is Small ribosomal subunit protein uS12cz/uS12cy (rps12-A) from Nandina domestica (Heavenly bamboo).